The primary structure comprises 130 residues: Small ribosomal subunit protein uS9 (130 aa).

Belongs to the universal ribosomal protein uS9 family.

The polypeptide is Small ribosomal subunit protein uS9 (rpsI) (Haemophilus influenzae (strain ATCC 51907 / DSM 11121 / KW20 / Rd)).